The sequence spans 611 residues: Rop guanine nucleotide exchange factor 5 (611 aa).

The interval 1-62 is disordered; it reads MENLVKSCAG…PPPPPSQILG (62 aa). Over residues 34–51 the composition is skewed to low complexity; sequence STSGASYESSSTTTVASS. The PRONE domain maps to 93 to 477; it reads FKAKEMNSAD…DLTKQSDDNN (385 aa). 2 disordered regions span residues 513–541 and 588–611; these read TTPGFSPSMISPKKGERRTPYSSKDTNKI and DVEEEKKRNSTSVHQKGPPKYTVS. A compositionally biased stretch (basic and acidic residues) spans 525–541; sequence KKGERRTPYSSKDTNKI.

Its function is as follows. Guanine-nucleotide exchange factor (GEF) that acts as an activator of Rop (Rho of plants) GTPases by promoting the exchange of GDP for GTP. The protein is Rop guanine nucleotide exchange factor 5 (ROPGEF5) of Arabidopsis thaliana (Mouse-ear cress).